We begin with the raw amino-acid sequence, 494 residues long: Neuronal acetylcholine receptor subunit alpha-6 (494 aa).

An N-terminal signal peptide occupies residues 1–31; the sequence is MHPKRRLCWCLPASGAWAFMLTSLIADTTAC. At 32–240 the chain is on the extracellular side; it reads ESEERLFHKL…TYSFYIRRLP (209 aa). N-linked (GlcNAc...) asparagine glycans are attached at residues asparagine 54 and asparagine 171. Cysteine 158 and cysteine 172 are disulfide-bonded. 3 helical membrane passes run 241–265, 272–290, and 306–327; these read MFYT…FYLP, VTLC…LVIT, and YLLF…VLNI. Over 328–468 the chain is Cytoplasmic; the sequence is HYRTPTTHTM…WKYVAMVIDR (141 aa). Positions 364–390 are disordered; sequence KNISKKTKKGSAKTSGKSKHSKHKDNK. Basic residues predominate over residues 366 to 390; sequence ISKKTKKGSAKTSGKSKHSKHKDNK. A helical membrane pass occupies residues 469–489; that stretch reads VFLWVFIILCVFGTAGLFIQP.

It belongs to the ligand-gated ion channel (TC 1.A.9) family. Acetylcholine receptor (TC 1.A.9.1) subfamily. Alpha-6/CHRNA6 sub-subfamily. As to quaternary structure, neuronal AChR is composed of two different types of subunits: alpha and non-alpha (beta). CHRNA6/alpha-6 subunit can be combined to CHRNB2/beta-2, CHRNA4/alpha-4 and CHRNB3/beta-3 to give rise to functional receptors. Heteropentamers containing CHRNB3 have an stoichiometry of (CHRNA6:CHRNB2)2:CHRNB3. Interacts with LYPD6.

It localises to the synaptic cell membrane. It carries out the reaction K(+)(in) = K(+)(out). The catalysed reaction is Na(+)(in) = Na(+)(out). It catalyses the reaction Ca(2+)(in) = Ca(2+)(out). Its activity is regulated as follows. Activated by a myriad of ligands such as acetylcholine, cytisine and nicotine. CHRNA6 nAChR activity is inhibited by the antagonists alpha-conotoxin MII and PIA, a small disulfide-constrained peptides from cone snails. Its function is as follows. Component of neuronal acetylcholine receptors (nAChRs) that function as pentameric, ligand-gated cation channels with high calcium permeability among other activities. nAChRs are excitatory neurotrasnmitter receptors formed by a collection of nAChR subunits known to mediate synaptic transmission in the nervous system and the neuromuscular junction. Each nAchR subunit confers differential attributes to channel properties, including activation, deactivation and desensitization kinetics, pH sensitivity, cation permeability, and binding to allosteric modulators. CHRNA6 forms pentameric channels with CHRNB2 and CHRNA4 that exhibit high sensitivity to ACh and nicotine and are predominantly expressed in only a few brain areas, including dopaminergic neurons, norepirephrine neurons and cells of the visual system. nAChrs containing CHRNA6 subunits mediate endogenous cholinergic modulation of dopamine and gamma-aminobutyric acid (GABA) release in response to nicotine at nerve terminals. Component of neuronal acetylcholine receptors (nAChRs) that function as pentameric, ligand-gated cation channels with high calcium permeability among other activities. nAChRs are excitatory neurotrasnmitter receptors formed by a collection of nAChR subunits known to mediate synaptic transmission in the nervous system and the neuromuscular junction. Each nAchR subunit confers differential attributes to channel properties, including activation, deactivation and desensitization kinetics, pH sensitivity, cation permeability, and binding to allosteric modulators. CHRNA6 forms pentameric channels with CHRNB2, CHRNB3 and CHRNA4 that exhibit high sensitivity to ACh and nicotine and are predominantly expressed in only a few brain areas, including dopaminergic neurons, norepirephrine neurons and cells of the visual system. nAChrs containing CHRNA6 subunits mediate endogenous cholinergic modulation of dopamine and gamma-aminobutyric acid (GABA) release in response to nicotine at nerve terminals. This is Neuronal acetylcholine receptor subunit alpha-6 (CHRNA6) from Gallus gallus (Chicken).